A 556-amino-acid polypeptide reads, in one-letter code: Arginine--tRNA ligase (556 aa).

The 'HIGH' region signature appears at 132-142; sequence ANPTGDLHLGH.

Belongs to the class-I aminoacyl-tRNA synthetase family. In terms of assembly, monomer.

It localises to the cytoplasm. The enzyme catalyses tRNA(Arg) + L-arginine + ATP = L-arginyl-tRNA(Arg) + AMP + diphosphate. The polypeptide is Arginine--tRNA ligase (Bacillus cereus (strain ATCC 10987 / NRS 248)).